Reading from the N-terminus, the 180-residue chain is Ribulose bisphosphate carboxylase small subunit, chloroplastic (180 aa).

The N-terminal 57 residues, 1–57 (MVSSMMVSSAATFTRASPAQSSMVAPFTGLKSASAFPVTRKPNADLSHLPSNGGRVQ), are a transit peptide targeting the chloroplast.

It belongs to the RuBisCO small chain family. Heterohexadecamer of 8 large and 8 small subunits.

Its subcellular location is the plastid. The protein localises to the chloroplast. Functionally, ruBisCO catalyzes two reactions: the carboxylation of D-ribulose 1,5-bisphosphate, the primary event in carbon dioxide fixation, as well as the oxidative fragmentation of the pentose substrate. Both reactions occur simultaneously and in competition at the same active site. Although the small subunit is not catalytic it is essential for maximal activity. The polypeptide is Ribulose bisphosphate carboxylase small subunit, chloroplastic (Musa acuminata (Banana)).